Reading from the N-terminus, the 148-residue chain is Probable transporter PD_1893 (148 aa).

The next 4 helical transmembrane spans lie at 11 to 31, 48 to 68, 93 to 113, and 118 to 138; these read FTVALAAGLLFGFGLALSEMI, NPSLLFVLGSALAVAFPGMAL, IVFGSAIFGTGWGLTGLCPGP, and LSTGLGSVLLFVAAMAAGMII.

The protein belongs to the TsuA/YedE (TC 9.B.102) family.

The protein localises to the cell inner membrane. The sequence is that of Probable transporter PD_1893 from Xylella fastidiosa (strain Temecula1 / ATCC 700964).